The sequence spans 494 residues: UDP-N-acetylmuramate--L-alanine ligase (494 aa).

122 to 128 (GTHGKTT) lines the ATP pocket.

It belongs to the MurCDEF family.

It localises to the cytoplasm. It catalyses the reaction UDP-N-acetyl-alpha-D-muramate + L-alanine + ATP = UDP-N-acetyl-alpha-D-muramoyl-L-alanine + ADP + phosphate + H(+). The protein operates within cell wall biogenesis; peptidoglycan biosynthesis. In terms of biological role, cell wall formation. The polypeptide is UDP-N-acetylmuramate--L-alanine ligase (Mycobacterium bovis (strain ATCC BAA-935 / AF2122/97)).